We begin with the raw amino-acid sequence, 638 residues long: Threonine--tRNA ligase (638 aa).

Residues 1–61 enclose the TGS domain; it reads MPLITLPDGN…DKDCSVKIFT (61 aa). Positions 243 to 535 are catalytic; the sequence is DHRKLGKEMD…LIENYAGKFP (293 aa). Zn(2+) contacts are provided by Cys-335, His-386, and His-512.

This sequence belongs to the class-II aminoacyl-tRNA synthetase family. Homodimer. Requires Zn(2+) as cofactor.

It is found in the cytoplasm. It catalyses the reaction tRNA(Thr) + L-threonine + ATP = L-threonyl-tRNA(Thr) + AMP + diphosphate + H(+). Catalyzes the attachment of threonine to tRNA(Thr) in a two-step reaction: L-threonine is first activated by ATP to form Thr-AMP and then transferred to the acceptor end of tRNA(Thr). Also edits incorrectly charged L-seryl-tRNA(Thr). This chain is Threonine--tRNA ligase, found in Pelagibacter ubique (strain HTCC1062).